We begin with the raw amino-acid sequence, 738 residues long: Ethylene receptor (738 aa).

3 consecutive transmembrane segments (helical) span residues Ile22–Val42, Val53–Trp73, and Val91–Leu111. The Cu cation site is built by Cys64 and His68. One can recognise a GAF domain in the interval Asp157 to Leu305. Residues Val348–Ile585 enclose the Histidine kinase domain. His351 carries the phosphohistidine; by autocatalysis modification. The Response regulatory domain occupies Lys613–Leu730. Asp661 carries the 4-aspartylphosphate modification.

It belongs to the ethylene receptor family. In terms of assembly, homodimer; disulfide-linked. Cu cation is required as a cofactor. Post-translationally, activation probably requires a transfer of a phosphate group between a His in the transmitter domain and an Asp of the receiver domain.

The protein localises to the endoplasmic reticulum membrane. The enzyme catalyses ATP + protein L-histidine = ADP + protein N-phospho-L-histidine.. Its function is as follows. May act early in the ethylene signal transduction pathway, possibly as an ethylene receptor, or as a regulator of the pathway. This Nicotiana tabacum (Common tobacco) protein is Ethylene receptor (ETR1).